The sequence spans 399 residues: Leu/Ile/Val-binding protein homolog 7 (399 aa).

Residues 1 to 22 (MEKHLIALSVAALLAGAAPASA) form the signal peptide.

Belongs to the leucine-binding protein family.

In terms of biological role, component of an amino-acid transport system. The chain is Leu/Ile/Val-binding protein homolog 7 from Brucella melitensis biotype 1 (strain ATCC 23456 / CCUG 17765 / NCTC 10094 / 16M).